The following is a 525-amino-acid chain: C6 finger transcription factor fsqA (525 aa).

The segment at residues 12–53 (CDRCRGQKLRCVGAGKPIPNSSSRLLRNEIPCDRCRRAKVEC) is a DNA-binding region (zn(2)-C6 fungal-type). Disordered stretches follow at residues 80 to 142 (RSSS…LGDM), 204 to 260 (EWNS…EPAG), and 327 to 371 (RARS…ARSS). Residues 95 to 115 (PPNSLVTAASKPHPNSLSFNH) are compositionally biased toward polar residues. Polar residues predominate over residues 327–337 (RARSQWSSLPE).

The protein localises to the nucleus. Functionally, transcription factor that regulates the expression of the gene cluster that mediates the biosynthesis of the isoquinoline alkaloids fumisoquin A, fumisoquin B and fumisoquin C; as well as small amounts of fumipyrrole as a shunt metabolite. The products of the cluster lead to a brown coloration and are important for growth and conidiation. This Aspergillus fumigatus (strain ATCC MYA-4609 / CBS 101355 / FGSC A1100 / Af293) (Neosartorya fumigata) protein is C6 finger transcription factor fsqA.